A 359-amino-acid polypeptide reads, in one-letter code: 3-isopropylmalate dehydrogenase (359 aa).

Positions 97, 107, 135, and 224 each coordinate substrate. Residues aspartate 224, aspartate 248, and aspartate 252 each contribute to the Mg(2+) site. Residue 282 to 294 (GSAPDIAGKDIAN) participates in NAD(+) binding.

Belongs to the isocitrate and isopropylmalate dehydrogenases family. LeuB type 1 subfamily. As to quaternary structure, homodimer. The cofactor is Mg(2+). Mn(2+) is required as a cofactor.

It localises to the cytoplasm. The catalysed reaction is (2R,3S)-3-isopropylmalate + NAD(+) = 4-methyl-2-oxopentanoate + CO2 + NADH. It functions in the pathway amino-acid biosynthesis; L-leucine biosynthesis; L-leucine from 3-methyl-2-oxobutanoate: step 3/4. In terms of biological role, catalyzes the oxidation of 3-carboxy-2-hydroxy-4-methylpentanoate (3-isopropylmalate) to 3-carboxy-4-methyl-2-oxopentanoate. The product decarboxylates to 4-methyl-2 oxopentanoate. The protein is 3-isopropylmalate dehydrogenase of Prochlorococcus marinus (strain NATL2A).